The chain runs to 87 residues: Xibalbin-2 (87 aa).

The N-terminal stretch at Met-1 to Ser-25 is a signal peptide. Residues Glu-26–Glu-45 constitute a propeptide that is removed on maturation.

The protein belongs to the xibalbin-2 family. In terms of processing, contains 5 disulfide bonds. In terms of tissue distribution, expressed by the venom gland. Not found in the whole body.

The protein resides in the secreted. Its function is as follows. Probable neurotoxin. Moderately inhibits voltage-gated potassium channels (Kv1.1/KCNA1, Kv1.2/KCNA2, Kv1.3/KCNA3, and Kv1.6/KCNA6, with the highest toxicity against Kv1.6 (73.2% inhibition at 1 uM)) and weakly inhibits sodium channels (Nav1.4/SCN4A). Does not activate protein kinase A type II (PKA-II) and MAP kinase Erk1/2 in sensory neurons. Does not show cytotoxic activity. Does not have an impact on Ca2+, cAMP, and NO signaling in the cell types analyzed. Does not interfere with the adhesion of leukocytes to endothelial cells. Moderately inhibits voltage-gated potassium channels (Kv1.1/KCNA1, Kv1.2/KCNA2, Kv1.3/KCNA3, and Kv1.6/KCNA6, with the highest toxicity against Kv1.6 (75.9% inhibition at 1 uM)). Does not activate protein kinase A type II (PKA-II) and MAP kinase Erk1/2 in sensory neurons. Does not show cytotoxic activity. Does not have an impact on Ca2+, cAMP, and NO signaling in the cell types analyzed. Does not interfere with the adhesion of leukocytes to endothelial cells. The sequence is that of Xibalbin-2 from Xibalbanus tulumensis (Blind cave remipede).